A 122-amino-acid chain; its full sequence is Large ribosomal subunit protein uL14c (122 aa).

The protein belongs to the universal ribosomal protein uL14 family. In terms of assembly, part of the 50S ribosomal subunit.

Its subcellular location is the plastid. It localises to the chloroplast. Its function is as follows. Binds to 23S rRNA. The sequence is that of Large ribosomal subunit protein uL14c from Pleurastrum terricola (Filamentous green alga).